Here is a 372-residue protein sequence, read N- to C-terminus: Glutamate 5-kinase (372 aa).

K14 is an ATP binding site. Residues S54, D141, and N153 each coordinate substrate. 173 to 174 (TD) serves as a coordination point for ATP. Residues 280-358 (RGTLVLDEGA…DAIVGVLGYM (79 aa)) form the PUA domain.

It belongs to the glutamate 5-kinase family.

It localises to the cytoplasm. The enzyme catalyses L-glutamate + ATP = L-glutamyl 5-phosphate + ADP. Its pathway is amino-acid biosynthesis; L-proline biosynthesis; L-glutamate 5-semialdehyde from L-glutamate: step 1/2. In terms of biological role, catalyzes the transfer of a phosphate group to glutamate to form L-glutamate 5-phosphate. This Pseudomonas fluorescens (strain ATCC BAA-477 / NRRL B-23932 / Pf-5) protein is Glutamate 5-kinase.